The primary structure comprises 186 residues: ATP synthase subunit delta (186 aa).

This sequence belongs to the ATPase delta chain family. In terms of assembly, F-type ATPases have 2 components, F(1) - the catalytic core - and F(0) - the membrane proton channel. F(1) has five subunits: alpha(3), beta(3), gamma(1), delta(1), epsilon(1). CF(0) has four main subunits: a(1), b(1), b'(1) and c(10-14). The alpha and beta chains form an alternating ring which encloses part of the gamma chain. F(1) is attached to F(0) by a central stalk formed by the gamma and epsilon chains, while a peripheral stalk is formed by the delta, b and b' chains.

It localises to the cell inner membrane. Its function is as follows. F(1)F(0) ATP synthase produces ATP from ADP in the presence of a proton or sodium gradient. F-type ATPases consist of two structural domains, F(1) containing the extramembraneous catalytic core and F(0) containing the membrane proton channel, linked together by a central stalk and a peripheral stalk. During catalysis, ATP synthesis in the catalytic domain of F(1) is coupled via a rotary mechanism of the central stalk subunits to proton translocation. Functionally, this protein is part of the stalk that links CF(0) to CF(1). It either transmits conformational changes from CF(0) to CF(1) or is implicated in proton conduction. The protein is ATP synthase subunit delta of Dinoroseobacter shibae (strain DSM 16493 / NCIMB 14021 / DFL 12).